We begin with the raw amino-acid sequence, 460 residues long: Putative 2,3-dihydroxypropane-1-sulfonate exporter (460 aa).

Topologically, residues Met1–Lys18 are cytoplasmic. A helical transmembrane segment spans residues Leu19–Leu39. The Periplasmic segment spans residues Leu40–Val46. Residues Leu47–Phe67 traverse the membrane as a helical segment. Topologically, residues Thr68–Phe91 are cytoplasmic. The chain crosses the membrane as a helical span at residues Val92–Phe112. Topologically, residues Glu113 to Thr122 are periplasmic. Residues Met123–Val143 form a helical membrane-spanning segment. Topologically, residues Pro144–Gln161 are cytoplasmic. The chain crosses the membrane as a helical span at residues Gly162–Ile182. The Periplasmic portion of the chain corresponds to Glu183–Tyr190. Residues Ile191 to Gly211 traverse the membrane as a helical segment. Topologically, residues Val212–Pro242 are cytoplasmic. The chain crosses the membrane as a helical span at residues Leu243–Ile263. At Gln264–Pro275 the chain is on the periplasmic side. Residues Ile276–Met296 traverse the membrane as a helical segment. At Pro297–Lys307 the chain is on the cytoplasmic side. Residues Val308–Gly328 traverse the membrane as a helical segment. Position 329 (Gly329) is a topological domain, periplasmic. Residues Ser330–Leu350 form a helical membrane-spanning segment. The Cytoplasmic segment spans residues Asn351–Gln386. The helical transmembrane segment at Ala387–Val407 threads the bilayer. Topologically, residues Gln408–Gln418 are periplasmic. A helical membrane pass occupies residues Leu419 to Tyr439. Over Asn440–Val460 the chain is Cytoplasmic.

This sequence belongs to the sodium:galactoside symporter (TC 2.A.2) family.

The protein resides in the cell inner membrane. In terms of biological role, could be involved in the export of 2,3-dihydroxypropane-1-sulfonate (DHPS). The protein is Putative 2,3-dihydroxypropane-1-sulfonate exporter (yihP) of Salmonella typhimurium (strain LT2 / SGSC1412 / ATCC 700720).